Consider the following 159-residue polypeptide: Large ribosomal subunit protein uL13 (159 aa).

It belongs to the universal ribosomal protein uL13 family. Part of the 50S ribosomal subunit.

Its function is as follows. This protein is one of the early assembly proteins of the 50S ribosomal subunit, although it is not seen to bind rRNA by itself. It is important during the early stages of 50S assembly. The polypeptide is Large ribosomal subunit protein uL13 (Methanopyrus kandleri (strain AV19 / DSM 6324 / JCM 9639 / NBRC 100938)).